Here is a 153-residue protein sequence, read N- to C-terminus: 6,7-dimethyl-8-ribityllumazine synthase (153 aa).

5-amino-6-(D-ribitylamino)uracil is bound by residues Phe22, 56–58, and 80–82; these read AFE and TVI. Position 85 to 86 (85 to 86) interacts with (2S)-2-hydroxy-3-oxobutyl phosphate; sequence AT. His88 serves as the catalytic Proton donor. Phe113 is a binding site for 5-amino-6-(D-ribitylamino)uracil. Arg127 lines the (2S)-2-hydroxy-3-oxobutyl phosphate pocket.

It belongs to the DMRL synthase family.

The catalysed reaction is (2S)-2-hydroxy-3-oxobutyl phosphate + 5-amino-6-(D-ribitylamino)uracil = 6,7-dimethyl-8-(1-D-ribityl)lumazine + phosphate + 2 H2O + H(+). It functions in the pathway cofactor biosynthesis; riboflavin biosynthesis; riboflavin from 2-hydroxy-3-oxobutyl phosphate and 5-amino-6-(D-ribitylamino)uracil: step 1/2. In terms of biological role, catalyzes the formation of 6,7-dimethyl-8-ribityllumazine by condensation of 5-amino-6-(D-ribitylamino)uracil with 3,4-dihydroxy-2-butanone 4-phosphate. This is the penultimate step in the biosynthesis of riboflavin. The chain is 6,7-dimethyl-8-ribityllumazine synthase from Clostridium perfringens (strain 13 / Type A).